Consider the following 233-residue polypeptide: Biosynthetic peptidoglycan transglycosylase (233 aa).

A helical transmembrane segment spans residues 4–24; the sequence is LAYLAGCLIVGVVAMQVYFFL.

It belongs to the glycosyltransferase 51 family.

The protein resides in the cell inner membrane. The catalysed reaction is [GlcNAc-(1-&gt;4)-Mur2Ac(oyl-L-Ala-gamma-D-Glu-L-Lys-D-Ala-D-Ala)](n)-di-trans,octa-cis-undecaprenyl diphosphate + beta-D-GlcNAc-(1-&gt;4)-Mur2Ac(oyl-L-Ala-gamma-D-Glu-L-Lys-D-Ala-D-Ala)-di-trans,octa-cis-undecaprenyl diphosphate = [GlcNAc-(1-&gt;4)-Mur2Ac(oyl-L-Ala-gamma-D-Glu-L-Lys-D-Ala-D-Ala)](n+1)-di-trans,octa-cis-undecaprenyl diphosphate + di-trans,octa-cis-undecaprenyl diphosphate + H(+). It participates in cell wall biogenesis; peptidoglycan biosynthesis. Functionally, peptidoglycan polymerase that catalyzes glycan chain elongation from lipid-linked precursors. This Cupriavidus metallidurans (strain ATCC 43123 / DSM 2839 / NBRC 102507 / CH34) (Ralstonia metallidurans) protein is Biosynthetic peptidoglycan transglycosylase.